The sequence spans 391 residues: Terminal nucleotidyltransferase 5C (391 aa).

The protein belongs to the TENT family. Interacts with BCCIP and PABPC1; the interaction has no effect on TENT5C poly(A) polymerase function. Interacts with PLK4; this interaction leads to the TENT5C recruitment into the centrosome. Expressed by splenocytes, expression is increased in activated splenocytes.

Its subcellular location is the nucleus. It localises to the cytoplasm. The protein localises to the cytoskeleton. It is found in the microtubule organizing center. The protein resides in the centrosome. The enzyme catalyses RNA(n) + ATP = RNA(n)-3'-adenine ribonucleotide + diphosphate. Catalyzes the transfer of one adenosine molecule from an ATP to an mRNA poly(A) tail bearing a 3'-OH terminal group and enhances mRNA stability and gene expression. Can also elongate RNA oligos ending with uridine molecule, provided that the sequence is adenosine-rich. Mainly targets mRNAs encoding endoplasmic reticulum-targeted protein. In Mus musculus (Mouse), this protein is Terminal nucleotidyltransferase 5C.